A 407-amino-acid polypeptide reads, in one-letter code: E3 ubiquitin-protein ligase TRIM13 (407 aa).

An RING-type zinc finger spans residues 10 to 58 (CPICCSLFDDPRVLPCSHNFCKKCLEGILEGSVRNSLWRPAPFKCPTCR). The segment at 89–131 (PKMPVCKGHLGQPLNIFCLTDMQLICGICATRGEHTKHVFCSI) adopts a B box-type zinc-finger fold. Residues cysteine 94, histidine 97, cysteine 117, and histidine 123 each coordinate Zn(2+). The stretch at 172–200 (LQLLTKDSDKVKEFFEKLQHTLDQKKNEI) forms a coiled coil. Residues 317 to 337 (LFLLILLLGLVIVFGPTMFLE) form a helical membrane-spanning segment.

This sequence belongs to the TRIM/RBCC family. As to quaternary structure, interacts (via C-terminal domain) with VCP. Interacts with AKT1; the interaction ubiquitinates AKT1 and leads to its proteasomal degradation. Interacts with MDM2; the interaction ubiquitinates AKT1 and leads to its proteasomal degradation. Interacts with p62/SQSTM1. Interacts with TRAF6. Interacts with IKBKG/NEMO. Post-translationally, auto-ubiquitinated; requires the RING-type zinc finger. Auto-polyubiquitination leads to proteasomal degradation.

Its subcellular location is the endoplasmic reticulum membrane. The enzyme catalyses S-ubiquitinyl-[E2 ubiquitin-conjugating enzyme]-L-cysteine + [acceptor protein]-L-lysine = [E2 ubiquitin-conjugating enzyme]-L-cysteine + N(6)-ubiquitinyl-[acceptor protein]-L-lysine.. It functions in the pathway protein modification; protein ubiquitination. Endoplasmic reticulum (ER) membrane anchored E3 ligase involved in the retrotranslocation and turnover of membrane and secretory proteins from the ER through a set of processes named ER-associated degradation (ERAD). This process acts on misfolded proteins as well as in the regulated degradation of correctly folded proteins. Enhances ionizing radiation-induced p53/TP53 stability and apoptosis via ubiquitinating MDM2 and AKT1 and decreasing AKT1 kinase activity through MDM2 and AKT1 proteasomal degradation. Regulates ER stress-induced autophagy, and may act as a tumor suppressor. Also plays a role in innate immune response by stimulating NF-kappa-B activity in the TLR2 signaling pathway. Ubiquitinates TRAF6 via the 'Lys-29'-linked polyubiquitination chain resulting in NF-kappa-B activation. Participates as well in T-cell receptor-mediated NF-kappa-B activation. In the presence of TNF, modulates the IKK complex by regulating IKBKG/NEMO ubiquitination leading to the repression of NF-kappa-B. This is E3 ubiquitin-protein ligase TRIM13 (TRIM13) from Homo sapiens (Human).